The sequence spans 59 residues: Large ribosomal subunit protein uL30 (59 aa).

Belongs to the universal ribosomal protein uL30 family. Part of the 50S ribosomal subunit.

The chain is Large ribosomal subunit protein uL30 from Hydrogenobaculum sp. (strain Y04AAS1).